The sequence spans 293 residues: 4-hydroxy-tetrahydrodipicolinate synthase (293 aa).

Residue Thr-47 coordinates pyruvate. The Proton donor/acceptor role is filled by Tyr-135. Residue Lys-163 is the Schiff-base intermediate with substrate of the active site. Position 205 (Val-205) interacts with pyruvate.

This sequence belongs to the DapA family. As to quaternary structure, homotetramer; dimer of dimers.

It localises to the cytoplasm. It catalyses the reaction L-aspartate 4-semialdehyde + pyruvate = (2S,4S)-4-hydroxy-2,3,4,5-tetrahydrodipicolinate + H2O + H(+). Its pathway is amino-acid biosynthesis; L-lysine biosynthesis via DAP pathway; (S)-tetrahydrodipicolinate from L-aspartate: step 3/4. In terms of biological role, catalyzes the condensation of (S)-aspartate-beta-semialdehyde [(S)-ASA] and pyruvate to 4-hydroxy-tetrahydrodipicolinate (HTPA). This is 4-hydroxy-tetrahydrodipicolinate synthase from Methylibium petroleiphilum (strain ATCC BAA-1232 / LMG 22953 / PM1).